The chain runs to 201 residues: Lipoprotein signal peptidase (201 aa).

2 helical membrane-spanning segments follow: residues 73–93 and 97–117; these read SNAI…YLMI and TIGS…NLID. Residues aspartate 126 and aspartate 144 contribute to the active site. A helical transmembrane segment spans residues 135 to 155; that stretch reads YSFPVFNLADCFIIIGVIILI.

It belongs to the peptidase A8 family.

Its subcellular location is the cell inner membrane. It carries out the reaction Release of signal peptides from bacterial membrane prolipoproteins. Hydrolyzes -Xaa-Yaa-Zaa-|-(S,diacylglyceryl)Cys-, in which Xaa is hydrophobic (preferably Leu), and Yaa (Ala or Ser) and Zaa (Gly or Ala) have small, neutral side chains.. The protein operates within protein modification; lipoprotein biosynthesis (signal peptide cleavage). Its function is as follows. This protein specifically catalyzes the removal of signal peptides from prolipoproteins. This chain is Lipoprotein signal peptidase, found in Rickettsia conorii (strain ATCC VR-613 / Malish 7).